The chain runs to 203 residues: Thymidylate kinase (203 aa).

14–21 (GGEGSGKS) serves as a coordination point for ATP.

The protein belongs to the thymidylate kinase family.

It carries out the reaction dTMP + ATP = dTDP + ADP. Its function is as follows. Phosphorylation of dTMP to form dTDP in both de novo and salvage pathways of dTTP synthesis. The protein is Thymidylate kinase of Rickettsia canadensis (strain McKiel).